The following is a 477-amino-acid chain: Trigger factor (477 aa).

One can recognise a PPIase FKBP-type domain in the interval 169 to 254 (EDRVTIDYLG…VKEVAKPNEL (86 aa)). A disordered region spans residues 435-477 (VSKEELTAEDEDAASEAKPAKKAAAKKKAAPKKKAEEGKSEEA). Residues 454 to 466 (AKKAAAKKKAAPK) are compositionally biased toward basic residues. Residues 467-477 (KKAEEGKSEEA) show a composition bias toward basic and acidic residues.

The protein belongs to the FKBP-type PPIase family. Tig subfamily.

It localises to the cytoplasm. It carries out the reaction [protein]-peptidylproline (omega=180) = [protein]-peptidylproline (omega=0). Involved in protein export. Acts as a chaperone by maintaining the newly synthesized protein in an open conformation. Functions as a peptidyl-prolyl cis-trans isomerase. This is Trigger factor (tig) from Brucella melitensis biotype 1 (strain ATCC 23456 / CCUG 17765 / NCTC 10094 / 16M).